A 416-amino-acid chain; its full sequence is Gamma-glutamyl phosphate reductase (416 aa).

It belongs to the gamma-glutamyl phosphate reductase family.

The protein localises to the cytoplasm. It catalyses the reaction L-glutamate 5-semialdehyde + phosphate + NADP(+) = L-glutamyl 5-phosphate + NADPH + H(+). It participates in amino-acid biosynthesis; L-proline biosynthesis; L-glutamate 5-semialdehyde from L-glutamate: step 2/2. Its function is as follows. Catalyzes the NADPH-dependent reduction of L-glutamate 5-phosphate into L-glutamate 5-semialdehyde and phosphate. The product spontaneously undergoes cyclization to form 1-pyrroline-5-carboxylate. In Streptococcus thermophilus (strain ATCC BAA-491 / LMD-9), this protein is Gamma-glutamyl phosphate reductase.